Consider the following 261-residue polypeptide: Methyltransferase nsrG (261 aa).

The interval aspartate 49–phenylalanine 141 is methyltransferase domain.

Belongs to the methyltransferase superfamily.

It functions in the pathway secondary metabolite biosynthesis. Methyltransferase; part of the gene cluster that mediates the biosynthesis of the tetrahydroxanthone dimer neosartorin, which exhibits antibacterial activity. The two different monomeric units appear to be synthesized by the same set of enzymes, among which the Baeyer-Villiger monooxygenase nsrF is the key enzyme for the divergence of the biosynthetic routes. The pathway begins with the synthesis of atrochrysone thioester by the polyketide synthase nsrB. The atrochrysone carboxyl ACP thioesterase nsrC then breaks the thioester bond and releases the atrochrysone carboxylic acid from AacuL. Atrochrysone carboxylic acid is decarboxylated by the decarboxylase nsrE, and oxidized by the anthrone oxygenase nsrD to yield emodin. Emodin is then reduced to emodin hydroquinone by the oxidoreductase nsrR. A-ring reduction by the short chain dehydrogenase nsrJ, dehydration by the scytalone dehydratase-like protein nsrI and probable spontaneous re-oxidation, results in overall deoxygenation to chrysophanol. The Baeyer-Villiger monooxygenase nsrF accepts chrysophanol as a substrate to insert one oxygen atom at two different positions to yield the precursors of both monomric units. NsrF is promiscuous/flexible in interacting with the 2 (non methylated and methylated) aromatic rings of chrysophanol, thus diverging the biosynthetic pathway at this point. After the hydrolysis of the lactones, methylesterification by the methyltransferase nsrG yields respectively moniliphenone and 2,2',6'-trihydroxy-4-methyl-6-methoxya-cyldiphenylmethanone. The next steps are the hydroxylation by the FAD-dependent monooxygenase nsrK, followed by isomerization by the monooxygenase nsrQ. The short chain dehydrogenase/reductase nsrO then catalyzes the C-5 ketoreduction to give the xanthone skeleton of blennolide C and 5-acetylblennolide A. The acetyltransferase nsrL has a strict substrate specificity and uses only blennolide A but not blennolide C to yield 5-acetylblennolide A as the single-acetylated product. In the final step of the biosynthesis, the heterodimerization of the 2 xanthones, blennolide C and 5-acetylblennolide A, is catalyzed by the cytochrome P450 monooxygenase nsrP. NsrP can utilize at least three different xanthones as its substrates to perform the dimerization reaction. The chain is Methyltransferase nsrG from Aspergillus novofumigatus (strain IBT 16806).